A 336-amino-acid chain; its full sequence is Phosphoribosylformylglycinamidine cyclo-ligase (336 aa).

It belongs to the AIR synthase family.

Its subcellular location is the cytoplasm. The enzyme catalyses 2-formamido-N(1)-(5-O-phospho-beta-D-ribosyl)acetamidine + ATP = 5-amino-1-(5-phospho-beta-D-ribosyl)imidazole + ADP + phosphate + H(+). It participates in purine metabolism; IMP biosynthesis via de novo pathway; 5-amino-1-(5-phospho-D-ribosyl)imidazole from N(2)-formyl-N(1)-(5-phospho-D-ribosyl)glycinamide: step 2/2. This Caldanaerobacter subterraneus subsp. tengcongensis (strain DSM 15242 / JCM 11007 / NBRC 100824 / MB4) (Thermoanaerobacter tengcongensis) protein is Phosphoribosylformylglycinamidine cyclo-ligase.